A 566-amino-acid polypeptide reads, in one-letter code: Glutamate--tRNA ligase (566 aa).

Positions 93–103 (PNPDYTIHLGN) match the 'HIGH' region motif.

Belongs to the class-I aminoacyl-tRNA synthetase family. Glutamate--tRNA ligase type 2 subfamily.

The protein localises to the cytoplasm. The enzyme catalyses tRNA(Glu) + L-glutamate + ATP = L-glutamyl-tRNA(Glu) + AMP + diphosphate. In terms of biological role, catalyzes the attachment of glutamate to tRNA(Glu) in a two-step reaction: glutamate is first activated by ATP to form Glu-AMP and then transferred to the acceptor end of tRNA(Glu). The chain is Glutamate--tRNA ligase from Staphylothermus marinus (strain ATCC 43588 / DSM 3639 / JCM 9404 / F1).